Consider the following 585-residue polypeptide: NADP-reducing hydrogenase subunit HndD (585 aa).

The 2Fe-2S ferredoxin-type domain maps to 2–85 (SMLTITIDGK…NMVVKTNSLR (84 aa)). The [2Fe-2S] cluster site is built by C36, C52, C55, and C69. The 4Fe-4S His(Cys)3-ligated-type domain occupies 85–124 (RVLNARRTVLELLLSDHPKDCLVCAKSGECELQTLAERFG). H101, C105, C108, and C114 together coordinate [4Fe-4S] cluster. 4Fe-4S ferredoxin-type domains are found at residues 144–174 (ASII…VLSG) and 185–216 (PAFE…EHEY).

In terms of assembly, heterotetramer composed of HndA, HndB, HndC and HndD subunits. HndD is probably the hydrogenase subunit. [4Fe-4S] cluster is required as a cofactor.

It catalyses the reaction H2 + NADP(+) = NADPH + H(+). Inhibited by oxygen. Functionally, catalyzes the reduction of NADP in the presence of molecular H(2) to yield NADPH. The protein is NADP-reducing hydrogenase subunit HndD (hndD) of Solidesulfovibrio fructosivorans (Desulfovibrio fructosivorans).